A 736-amino-acid chain; its full sequence is Subtilisin-like protease SBT4.12 (736 aa).

The first 24 residues, 1–24, serve as a signal peptide directing secretion; sequence MANLAASTCLYSWLLVLLLSSVSA. Positions 25 to 110 are cleaved as a propeptide — activation peptide; it reads IIDEDTQVYI…VFPNKILQLH (86 aa). An Inhibitor I9 domain is found at 32–110; it reads VYIVYMGSLS…VFPNKILQLH (79 aa). Residues 114 to 580 enclose the Peptidase S8 domain; sequence SWDFMGVKEG…AGHVDPMAAL (467 aa). Catalysis depends on Asp142, which acts as the Charge relay system. The N-linked (GlcNAc...) asparagine glycan is linked to Asn173. The active-site Charge relay system is the His197. Asn220, Asn381, and Asn459 each carry an N-linked (GlcNAc...) asparagine glycan. In terms of domain architecture, PA spans 353–437; sequence KYPLVYGKSA…GLKAKDFKSL (85 aa). Ser519 functions as the Charge relay system in the catalytic mechanism. N-linked (GlcNAc...) asparagine glycans are attached at residues Asn601, Asn649, and Asn659.

Belongs to the peptidase S8 family. The C-terminal propeptide is autocleaved. Specifically expressed in root stele of the root hair zone.

It is found in the secreted. The sequence is that of Subtilisin-like protease SBT4.12 from Arabidopsis thaliana (Mouse-ear cress).